A 331-amino-acid chain; its full sequence is Phenylalanine--tRNA ligase alpha subunit (331 aa).

Position 252 (Glu-252) interacts with Mg(2+).

This sequence belongs to the class-II aminoacyl-tRNA synthetase family. Phe-tRNA synthetase alpha subunit type 1 subfamily. Tetramer of two alpha and two beta subunits. It depends on Mg(2+) as a cofactor.

The protein resides in the cytoplasm. The catalysed reaction is tRNA(Phe) + L-phenylalanine + ATP = L-phenylalanyl-tRNA(Phe) + AMP + diphosphate + H(+). This is Phenylalanine--tRNA ligase alpha subunit from Xanthomonas euvesicatoria pv. vesicatoria (strain 85-10) (Xanthomonas campestris pv. vesicatoria).